The sequence spans 133 residues: Cytochrome c' (133 aa).

Heme c-binding residues include arginine 12, threonine 72, cysteine 122, cysteine 125, and histidine 126.

In terms of processing, binds 1 heme c group covalently per subunit.

Functionally, cytochrome c' is the most widely occurring bacterial c-type cytochrome. Cytochromes c' are high-spin proteins and the heme has no sixth ligand. Their exact function is not known. The chain is Cytochrome c' from Rhodocyclus tenuis (Rhodospirillum tenue).